The sequence spans 468 residues: UDP-N-acetylmuramate--L-alanine ligase (468 aa).

121-127 serves as a coordination point for ATP; that stretch reads GSHGKTT.

The protein belongs to the MurCDEF family.

The protein resides in the cytoplasm. It carries out the reaction UDP-N-acetyl-alpha-D-muramate + L-alanine + ATP = UDP-N-acetyl-alpha-D-muramoyl-L-alanine + ADP + phosphate + H(+). It functions in the pathway cell wall biogenesis; peptidoglycan biosynthesis. In terms of biological role, cell wall formation. This Borreliella afzelii (strain PKo) (Borrelia afzelii) protein is UDP-N-acetylmuramate--L-alanine ligase.